Here is a 602-residue protein sequence, read N- to C-terminus: Beta-(1--&gt;2)glucan export ATP-binding/permease protein NdvA (602 aa).

In terms of domain architecture, ABC transmembrane type-1 spans 21-311; the sequence is GWVLAGANLL…VVGFVNSVFM (291 aa). A run of 6 helical transmembrane segments spans residues 22 to 42, 68 to 88, 146 to 166, 167 to 187, 238 to 258, and 285 to 305; these read WVLA…PVLF, LLLA…AVAL, EHFA…YINW, RLAL…TLVV, LLAM…ITRA, and IVMF…VVGF. Residues 345–579 form the ABC transporter domain; it reads VEFDNVSFSY…RGYFAELAHA (235 aa). ATP is bound at residue 378 to 385; sequence GATGAGKS.

It belongs to the ABC transporter superfamily. Beta-(1--&gt;2)glucan exporter (TC 3.A.1.108.1) family. Homodimer.

The protein resides in the cell inner membrane. The enzyme catalyses [(1-&gt;2)-beta-D-glucosyl](n)(in) + ATP + H2O = [(1-&gt;2)-beta-D-glucosyl](n)(out) + ADP + phosphate + H(+). Functionally, involved in Beta-(1--&gt;2)glucan export. Transmembrane domains (TMD) form a pore in the inner membrane and the ATP-binding domain (NBD) is responsible for energy generation. The protein is Beta-(1--&gt;2)glucan export ATP-binding/permease protein NdvA of Rhodopseudomonas palustris (strain BisA53).